The following is a 302-amino-acid chain: Nucleotide-binding protein STH186 (302 aa).

Position 15 to 22 (15 to 22 (GMSGAGKT)) interacts with ATP. GTP is bound at residue 66–69 (DIRG).

Belongs to the RapZ-like family.

Displays ATPase and GTPase activities. The protein is Nucleotide-binding protein STH186 of Symbiobacterium thermophilum (strain DSM 24528 / JCM 14929 / IAM 14863 / T).